Consider the following 171-residue polypeptide: Co-chaperone protein HscB homolog (171 aa).

One can recognise a J domain in the interval 2–74; the sequence is NHFELFGLPN…VTRAEYILSE (73 aa).

Belongs to the HscB family. Interacts with HscA and stimulates its ATPase activity.

Its function is as follows. Co-chaperone involved in the maturation of iron-sulfur cluster-containing proteins. Seems to help targeting proteins to be folded toward HscA. This is Co-chaperone protein HscB homolog from Aliivibrio salmonicida (strain LFI1238) (Vibrio salmonicida (strain LFI1238)).